Here is a 390-residue protein sequence, read N- to C-terminus: Oxygen-dependent coproporphyrinogen-III oxidase (390 aa).

An important for dimerization region spans residues 131–140; sequence VLQDGDVFEK. Ser181 contacts substrate. The active-site Proton donor is the His195. Substrate is bound by residues 197–199 and 348–353; these read NYR and GARYES. Positions 329 to 365 are important for dimerization; sequence YVEFNLIYDRGTKFGLYTPGARYESILMSLPLHARWE.

The protein belongs to the aerobic coproporphyrinogen-III oxidase family. In terms of assembly, homodimer.

It catalyses the reaction coproporphyrinogen III + O2 + 2 H(+) = protoporphyrinogen IX + 2 CO2 + 2 H2O. It functions in the pathway porphyrin-containing compound metabolism; protoporphyrin-IX biosynthesis; protoporphyrinogen-IX from coproporphyrinogen-III (O2 route): step 1/1. Functionally, involved in the heme biosynthesis. Catalyzes the aerobic oxidative decarboxylation of propionate groups of rings A and B of coproporphyrinogen-III to yield the vinyl groups in protoporphyrinogen-IX. This Drosophila melanogaster (Fruit fly) protein is Oxygen-dependent coproporphyrinogen-III oxidase (Coprox).